A 303-amino-acid polypeptide reads, in one-letter code: Ribonuclease HIII (303 aa).

The region spanning 85-302 (CSLIGSDEVG…TKKAYQLLKK (218 aa)) is the RNase H type-2 domain. Positions 91, 92, and 196 each coordinate a divalent metal cation.

Belongs to the RNase HII family. RnhC subfamily. The cofactor is Mn(2+). Mg(2+) serves as cofactor.

Its subcellular location is the cytoplasm. The catalysed reaction is Endonucleolytic cleavage to 5'-phosphomonoester.. Functionally, endonuclease that specifically degrades the RNA of RNA-DNA hybrids. The protein is Ribonuclease HIII of Streptococcus mutans serotype c (strain ATCC 700610 / UA159).